Here is a 297-residue protein sequence, read N- to C-terminus: HTH-type transcriptional regulator ArgP (297 aa).

An HTH lysR-type domain is found at 4-60; sequence PDYRTLQALDAVIRERGFERAAQKLCITQSAVSQRIKQLENMFGQPLLVRTVPPRPT. The H-T-H motif DNA-binding region spans 21 to 40; it reads FERAAQKLCITQSAVSQRIK.

It belongs to the LysR transcriptional regulatory family. Homodimer.

Its function is as follows. Controls the transcription of genes involved in arginine and lysine metabolism. This chain is HTH-type transcriptional regulator ArgP, found in Citrobacter koseri (strain ATCC BAA-895 / CDC 4225-83 / SGSC4696).